Consider the following 99-residue polypeptide: UPF0235 protein Neut_2146 (99 aa).

This sequence belongs to the UPF0235 family.

The polypeptide is UPF0235 protein Neut_2146 (Nitrosomonas eutropha (strain DSM 101675 / C91 / Nm57)).